We begin with the raw amino-acid sequence, 31 residues long: GFFSTVKNLATNVAGTVIDTLKCKVTGGCRS.

The cysteines at positions 23 and 29 are disulfide-linked.

In terms of tissue distribution, expressed by the skin glands.

Its subcellular location is the secreted. Functionally, antimicrobial activity against Gram-negative bacterium E.coli. This chain is Ranatuerin-2PL, found in Lithobates palustris (Pickerel frog).